The chain runs to 394 residues: MALEVGDMEDGQLSDSDSDMTVAPSDRPLQLPKVLGGDSAMRAFQNTATACAPVSHYRAVESVDSSEESFSDSDDDSCLWKRKRQKCFNPPPKPEPFQFGQSSQKPPVAGGKKINNIWGAVLQEQNQDAVATELGILGMEGTIDRSRQSETYNYLLAKKLRKESQEHTKDLDKELDEYMHGGKKMGSKEEENGQGHLKRKRPVKDRLGNRPEMNYKGRYEITAEDSQEKVADEISFRLQEPKKDLIARVVRIIGNKKAIELLMETAEVEQNGGLFIMNGSRRRTPGGVFLNLLKNTPSISEEQIKDIFYIENQKEYENKKAARKRRTQVLGKKMKQAIKSLNFQEDDDTSRETFASDTNEALASLDESQEGHAEAKLEAEEAIEVDHSHDLDIF.

Residues 1–18 (MALEVGDMEDGQLSDSDS) show a composition bias toward acidic residues. The interval 1–33 (MALEVGDMEDGQLSDSDSDMTVAPSDRPLQLPK) is disordered. Ala2 is modified (N-acetylalanine). Residues 2 to 329 (ALEVGDMEDG…KAARKRRTQV (328 aa)) form a necessary for interaction with CBP80 region. Residues Ser14, Ser16, Ser65, Ser66, Ser69, and Ser73 each carry the phosphoserine modification. The Nuclear localization signal motif lies at 81–84 (KRKR). A disordered region spans residues 83-111 (KRQKCFNPPPKPEPFQFGQSSQKPPVAGG). Residues 130-139 (VATELGILGM) carry the Nuclear export signal motif. Positions 183–193 (KKMGSKEEENG) are enriched in basic and acidic residues. Positions 183–211 (KKMGSKEEENGQGHLKRKRPVKDRLGNRP) are disordered. A Nuclear localization signal motif is present at residues 198–201 (KRKR). The residue at position 226 (Ser226) is a Phosphoserine. A sufficient for poly U RNA-binding region spans residues 228–328 (EKVADEISFR…KKAARKRRTQ (101 aa)). The segment at 279 to 287 (GSRRRTPGG) is necessary for poly U RNA-binding and snRNA export. Thr296 is subject to Phosphothreonine. Residues Ser356 and Ser368 each carry the phosphoserine modification.

This sequence belongs to the PHAX family. Found in a U snRNA export complex with PHAX/RNUXA, NCBP1/CBP80, NCBP2/CBP20, RAN, XPO1 and m7G-capped RNA. Part of a precomplex with PHAX/RNUXA, NCBP1/CBP80, NCBP2/CBP20 and m7G-capped RNA. Interacts with NCBP1/CBP80. Found in a complex with snoRNA. Interacts with NCBP2/CBP20. Interacts with DDX39A; this interaction stimulates PHAX RNA binding activity. Post-translationally, phosphorylated in the nucleus. Dephosphorylated in the cytoplasm.

Its subcellular location is the nucleus. It localises to the nucleoplasm. The protein resides in the cajal body. It is found in the cytoplasm. Its function is as follows. A phosphoprotein adapter involved in the XPO1-mediated U snRNA export from the nucleus. Bridge components required for U snRNA export, the cap binding complex (CBC)-bound snRNA on the one hand and the GTPase Ran in its active GTP-bound form together with the export receptor XPO1 on the other. Its phosphorylation in the nucleus is required for U snRNA export complex assembly and export, while its dephosphorylation in the cytoplasm causes export complex disassembly. It is recycled back to the nucleus via the importin alpha/beta heterodimeric import receptor. The directionality of nuclear export is thought to be conferred by an asymmetric distribution of the GTP- and GDP-bound forms of Ran between the cytoplasm and nucleus. Its compartmentalized phosphorylation cycle may also contribute to the directionality of export. Binds strongly to m7G-capped U1 and U5 small nuclear RNAs (snRNAs) in a sequence-unspecific manner and phosphorylation-independent manner. Also plays a role in the biogenesis of U3 small nucleolar RNA (snoRNA). Involved in the U3 snoRNA transport from nucleoplasm to Cajal bodies. Binds strongly to m7G-capped U3, U8 and U13 precursor snoRNAs and weakly to trimethylated (TMG)-capped U3, U8 and U13 snoRNAs. Also binds to telomerase RNA. The polypeptide is Phosphorylated adapter RNA export protein (PHAX) (Homo sapiens (Human)).